Reading from the N-terminus, the 92-residue chain is PqqA binding protein (92 aa).

The protein belongs to the PqqD family. In terms of assembly, monomer. Interacts with PqqE.

It participates in cofactor biosynthesis; pyrroloquinoline quinone biosynthesis. Functions as a PqqA binding protein and presents PqqA to PqqE, in the pyrroloquinoline quinone (PQQ) biosynthetic pathway. This Pseudomonas aeruginosa (strain UCBPP-PA14) protein is PqqA binding protein.